A 653-amino-acid chain; its full sequence is Fructose-1,6-bisphosphatase class 3 (653 aa).

Belongs to the FBPase class 3 family. Requires Mn(2+) as cofactor.

It catalyses the reaction beta-D-fructose 1,6-bisphosphate + H2O = beta-D-fructose 6-phosphate + phosphate. It participates in carbohydrate biosynthesis; gluconeogenesis. The chain is Fructose-1,6-bisphosphatase class 3 from Listeria innocua serovar 6a (strain ATCC BAA-680 / CLIP 11262).